A 236-amino-acid chain; its full sequence is Small ribosomal subunit protein uS3 (236 aa).

Residues 39-107 (VRHFLMQKLS…PTQLNIAEVR (69 aa)) enclose the KH type-2 domain.

Belongs to the universal ribosomal protein uS3 family. As to quaternary structure, part of the 30S ribosomal subunit. Forms a tight complex with proteins S10 and S14.

Functionally, binds the lower part of the 30S subunit head. Binds mRNA in the 70S ribosome, positioning it for translation. This is Small ribosomal subunit protein uS3 from Blochmanniella pennsylvanica (strain BPEN).